Consider the following 1024-residue polypeptide: Beta-galactosidase 2 (1024 aa).

Substrate-binding residues include N103 and D202. D202 contributes to the Na(+) binding site. Mg(2+)-binding residues include E417, H419, and E462. Substrate is bound by residues E462 and 538-541; that span reads EYAH. E462 functions as the Proton donor in the catalytic mechanism. Catalysis depends on E538, which acts as the Nucleophile. Mg(2+) is bound at residue N598. 2 residues coordinate Na(+): F602 and N605. Substrate-binding residues include N605 and W1000.

The protein belongs to the glycosyl hydrolase 2 family. As to quaternary structure, homotetramer. Requires Mg(2+) as cofactor. Na(+) is required as a cofactor.

It catalyses the reaction Hydrolysis of terminal non-reducing beta-D-galactose residues in beta-D-galactosides.. This Klebsiella pneumoniae subsp. pneumoniae (strain ATCC 700721 / MGH 78578) protein is Beta-galactosidase 2.